The following is a 181-amino-acid chain: ATP synthase subunit delta (181 aa).

It belongs to the ATPase delta chain family. As to quaternary structure, F-type ATPases have 2 components, F(1) - the catalytic core - and F(0) - the membrane proton channel. F(1) has five subunits: alpha(3), beta(3), gamma(1), delta(1), epsilon(1). F(0) has three main subunits: a(1), b(2) and c(10-14). The alpha and beta chains form an alternating ring which encloses part of the gamma chain. F(1) is attached to F(0) by a central stalk formed by the gamma and epsilon chains, while a peripheral stalk is formed by the delta and b chains.

The protein localises to the cell inner membrane. F(1)F(0) ATP synthase produces ATP from ADP in the presence of a proton or sodium gradient. F-type ATPases consist of two structural domains, F(1) containing the extramembraneous catalytic core and F(0) containing the membrane proton channel, linked together by a central stalk and a peripheral stalk. During catalysis, ATP synthesis in the catalytic domain of F(1) is coupled via a rotary mechanism of the central stalk subunits to proton translocation. Its function is as follows. This protein is part of the stalk that links CF(0) to CF(1). It either transmits conformational changes from CF(0) to CF(1) or is implicated in proton conduction. The sequence is that of ATP synthase subunit delta from Mannheimia succiniciproducens (strain KCTC 0769BP / MBEL55E).